Reading from the N-terminus, the 669-residue chain is Protein adenylyltransferase SelO, mitochondrial (669 aa).

The transit peptide at 1 to 115 (MAVYRAALGA…LGLGAPPARE (115 aa)) directs the protein to the mitochondrion. ATP is bound by residues G153, G155, K176, D188, G189, R246, and R253. The active-site Proton acceptor is the D338. N339 and D348 together coordinate Mg(2+). Residue D348 coordinates ATP. A disordered region spans residues 634-654 (ATDAEATEADGADGRQRSYSS). Residue T635 is modified to Phosphothreonine. A Phosphoserine modification is found at S653. Residue U667 is a non-standard amino acid, selenocysteine.

It belongs to the SELO family. The cofactor is Mg(2+).

It is found in the mitochondrion. It carries out the reaction L-tyrosyl-[protein] + ATP = O-(5'-adenylyl)-L-tyrosyl-[protein] + diphosphate. The catalysed reaction is L-threonyl-[protein] + ATP = 3-O-(5'-adenylyl)-L-threonyl-[protein] + diphosphate. The enzyme catalyses L-seryl-[protein] + ATP = 3-O-(5'-adenylyl)-L-seryl-[protein] + diphosphate. Its function is as follows. Catalyzes the transfer of adenosine 5'-monophosphate (AMP) to Ser, Thr and Tyr residues of target proteins (AMPylation). May be a redox-active mitochondrial selenoprotein which interacts with a redox target protein. This Homo sapiens (Human) protein is Protein adenylyltransferase SelO, mitochondrial.